Consider the following 346-residue polypeptide: Small ribosomal subunit biogenesis GTPase RsgA (346 aa).

The tract at residues 1–25 (MAKRKLTQNQTRRIQSNNAKTLHRH) is disordered. Positions 7–20 (TQNQTRRIQSNNAK) are enriched in polar residues. Positions 103–271 (ENEISRPDYY…LIDSPGIREF (169 aa)) constitute a CP-type G domain. Residues 159-162 (NKVD) and 213-221 (GQSGVGKSS) contribute to the GTP site. Positions 295, 300, 302, and 308 each coordinate Zn(2+).

The protein belongs to the TRAFAC class YlqF/YawG GTPase family. RsgA subfamily. As to quaternary structure, monomer. Associates with 30S ribosomal subunit, binds 16S rRNA. Requires Zn(2+) as cofactor.

The protein localises to the cytoplasm. One of several proteins that assist in the late maturation steps of the functional core of the 30S ribosomal subunit. Helps release RbfA from mature subunits. May play a role in the assembly of ribosomal proteins into the subunit. Circularly permuted GTPase that catalyzes slow GTP hydrolysis, GTPase activity is stimulated by the 30S ribosomal subunit. This chain is Small ribosomal subunit biogenesis GTPase RsgA, found in Haemophilus influenzae (strain ATCC 51907 / DSM 11121 / KW20 / Rd).